The sequence spans 275 residues: Large ribosomal subunit protein uL2 (275 aa).

The tract at residues 223–275 (GVVMNPVDHPHGGGEGRGKGHHPQSPWGVPAKGYKTRRGKRASDKFIVRRRNG) is disordered. The segment covering 230–240 (DHPHGGGEGRG) has biased composition (basic and acidic residues).

The protein belongs to the universal ribosomal protein uL2 family. In terms of assembly, part of the 50S ribosomal subunit. Forms a bridge to the 30S subunit in the 70S ribosome.

One of the primary rRNA binding proteins. Required for association of the 30S and 50S subunits to form the 70S ribosome, for tRNA binding and peptide bond formation. It has been suggested to have peptidyltransferase activity; this is somewhat controversial. Makes several contacts with the 16S rRNA in the 70S ribosome. This chain is Large ribosomal subunit protein uL2, found in Fervidobacterium nodosum (strain ATCC 35602 / DSM 5306 / Rt17-B1).